Consider the following 184-residue polypeptide: MKKLSILAVLAASPAMAATGPFLSLSNTNFIVTLAFLLFMGILLYAKVPGRILGMLDKRSVQIRTELEEARALREEARTILASYDRKQKEVQEQAARIVASARDEAQAAAEQAKADLRASIARRLAAAEDQIASAEAGAVRAIREQAVSVAVAAAADLLSRQMTPAAASASIDESIKEVEARFH.

Residues 4-24 (LSILAVLAASPAMAATGPFLS) form a helical membrane-spanning segment.

The protein belongs to the ATPase B chain family. F-type ATPases have 2 components, F(1) - the catalytic core - and F(0) - the membrane proton channel. F(1) has five subunits: alpha(3), beta(3), gamma(1), delta(1), epsilon(1). F(0) has three main subunits: a(1), b(2) and c(10-14). The alpha and beta chains form an alternating ring which encloses part of the gamma chain. F(1) is attached to F(0) by a central stalk formed by the gamma and epsilon chains, while a peripheral stalk is formed by the delta and b chains.

The protein localises to the cell inner membrane. Functionally, f(1)F(0) ATP synthase produces ATP from ADP in the presence of a proton or sodium gradient. F-type ATPases consist of two structural domains, F(1) containing the extramembraneous catalytic core and F(0) containing the membrane proton channel, linked together by a central stalk and a peripheral stalk. During catalysis, ATP synthesis in the catalytic domain of F(1) is coupled via a rotary mechanism of the central stalk subunits to proton translocation. Component of the F(0) channel, it forms part of the peripheral stalk, linking F(1) to F(0). This Cereibacter sphaeroides (strain ATCC 17023 / DSM 158 / JCM 6121 / CCUG 31486 / LMG 2827 / NBRC 12203 / NCIMB 8253 / ATH 2.4.1.) (Rhodobacter sphaeroides) protein is ATP synthase subunit b 1.